We begin with the raw amino-acid sequence, 206 residues long: Flavin reductase (NADPH) (206 aa).

NADP(+)-binding residues include G10, T12, G13, T15, R35, S38, and R39. S42 carries the phosphoserine modification. 4 residues coordinate NADP(+): D54, V55, L75, and G76. S82 bears the Phosphoserine mark. 5 residues coordinate NADP(+): M87, C109, H132, H153, and I154. C109 functions as the S-nitroso-cysteine intermediate; for S-nitroso-CoA-dependent nitrosyltransferase activity in the catalytic mechanism. C188 acts as the S-nitroso-cysteine intermediate; for S-nitroso-CoA-dependent nitrosyltransferase activity in catalysis.

It belongs to the BLVRB family. Monomer.

The protein resides in the cytoplasm. The catalysed reaction is reduced riboflavin + NADP(+) = riboflavin + NADPH + 2 H(+). The enzyme catalyses bilirubin IXbeta + NADP(+) = biliverdin IXbeta + NADPH + H(+). It catalyses the reaction FMNH2 + NAD(+) = FMN + NADH + 2 H(+). It carries out the reaction FMNH2 + NADP(+) = FMN + NADPH + 2 H(+). The catalysed reaction is S-nitroso-CoA + L-cysteinyl-[protein] = S-nitroso-L-cysteinyl-[protein] + CoA. The enzyme catalyses L-cysteinyl-[SCAN] + S-nitroso-CoA = S-nitroso-L-cysteinyl-[SCAN] + CoA. It catalyses the reaction S-nitroso-L-cysteinyl-[SCAN] + L-cysteinyl-[protein] = L-cysteinyl-[SCAN] + S-nitroso-L-cysteinyl-[protein]. In terms of biological role, enzyme that can both act as a NAD(P)H-dependent reductase and a S-nitroso-CoA-dependent nitrosyltransferase. Promotes fetal heme degradation during development. Also expressed in adult tissues, where it acts as a regulator of hematopoiesis, intermediary metabolism (glutaminolysis, glycolysis, TCA cycle and pentose phosphate pathway) and insulin signaling. Has a broad specificity oxidoreductase activity by catalyzing the NAD(P)H-dependent reduction of a variety of flavins, such as riboflavin, FAD or FMN, biliverdins, methemoglobin and PQQ (pyrroloquinoline quinone). Contributes to fetal heme catabolism by catalyzing reduction of biliverdin IXbeta into bilirubin IXbeta in the liver. Biliverdin IXbeta, which constitutes the major heme catabolite in the fetus is not present in adult. Does not reduce bilirubin IXalpha. Can also reduce the complexed Fe(3+) iron to Fe(2+) in the presence of FMN and NADPH. Acts as a protein nitrosyltransferase by catalyzing nitrosylation of cysteine residues of target proteins, such as HMOX2, INSR and IRS1. S-nitroso-CoA-dependent nitrosyltransferase activity is mediated via a 'ping-pong' mechanism: BLVRB first associates with both S-nitroso-CoA and protein substrate, nitric oxide group is then transferred from S-nitroso-CoA to Cys-109 and Cys-188 residues of BLVRB and from S-nitroso-BLVRB to the protein substrate. Inhibits insulin signaling by mediating nitrosylation of INSR and IRS1, leading to their inhibition. In Mus musculus (Mouse), this protein is Flavin reductase (NADPH) (Blvrb).